Here is a 212-residue protein sequence, read N- to C-terminus: MKRYFVTGTDTDCGKTFVTNQLVNYFSSSAAIKPIASGCEYSENQLVNSDALLHQQQNHLPLEVVNPWRFRLPVSPHLSARADGASIDVHKVADYCLNLQLNDIKKLFIEGAGGLMVPLNEQDTWLDFLKLTRIPVILVVGMKLGCINHTLLTQEVFEINKIKCQGWIANCLDQDMLMLDENISTLEAKLKYPLLARTNYGGKISDICLSSL.

An ATP-binding site is contributed by 12–17 (DCGKTF). Thr16 provides a ligand contact to Mg(2+). Lys33 is a catalytic residue. Ser37 provides a ligand contact to substrate. ATP is bound by residues Asp50, 110-113 (EGAG), and 170-171 (NC). 2 residues coordinate Mg(2+): Asp50 and Glu110.

It belongs to the dethiobiotin synthetase family. Homodimer. Requires Mg(2+) as cofactor.

It is found in the cytoplasm. It catalyses the reaction (7R,8S)-7,8-diammoniononanoate + CO2 + ATP = (4R,5S)-dethiobiotin + ADP + phosphate + 3 H(+). It participates in cofactor biosynthesis; biotin biosynthesis; biotin from 7,8-diaminononanoate: step 1/2. In terms of biological role, catalyzes a mechanistically unusual reaction, the ATP-dependent insertion of CO2 between the N7 and N8 nitrogen atoms of 7,8-diaminopelargonic acid (DAPA, also called 7,8-diammoniononanoate) to form a ureido ring. The sequence is that of ATP-dependent dethiobiotin synthetase BioD from Legionella pneumophila (strain Lens).